The chain runs to 224 residues: Uridylate kinase (224 aa).

6-10 serves as a coordination point for ATP; it reads KVTGK. Gly-41 lines the UMP pocket. Residues Gly-42 and Arg-46 each coordinate ATP. Residues Asp-63 and 111-117 contribute to the UMP site; that span reads FQPGQST. ATP-binding residues include Thr-137, Phe-143, and Asp-146.

This sequence belongs to the UMP kinase family. As to quaternary structure, homohexamer.

It localises to the cytoplasm. It carries out the reaction UMP + ATP = UDP + ADP. It functions in the pathway pyrimidine metabolism; CTP biosynthesis via de novo pathway; UDP from UMP (UMPK route): step 1/1. With respect to regulation, inhibited by UTP. In terms of biological role, catalyzes the reversible phosphorylation of UMP to UDP. The polypeptide is Uridylate kinase (Metallosphaera sedula (strain ATCC 51363 / DSM 5348 / JCM 9185 / NBRC 15509 / TH2)).